Here is a 131-residue protein sequence, read N- to C-terminus: Holo-[acyl-carrier-protein] synthase (131 aa).

Residues Asp-6 and Glu-55 each coordinate Mg(2+).

Belongs to the P-Pant transferase superfamily. AcpS family. It depends on Mg(2+) as a cofactor.

The protein resides in the cytoplasm. The catalysed reaction is apo-[ACP] + CoA = holo-[ACP] + adenosine 3',5'-bisphosphate + H(+). In terms of biological role, transfers the 4'-phosphopantetheine moiety from coenzyme A to a Ser of acyl-carrier-protein. This chain is Holo-[acyl-carrier-protein] synthase, found in Verminephrobacter eiseniae (strain EF01-2).